Consider the following 400-residue polypeptide: Acetate kinase (400 aa).

Position 7 (asparagine 7) interacts with Mg(2+). Lysine 14 is an ATP binding site. Arginine 92 contributes to the substrate binding site. Aspartate 149 acts as the Proton donor/acceptor in catalysis. ATP contacts are provided by residues 209-213, 283-285, and 331-335; these read HLGNG, DAR, and GMGEN. Glutamate 385 contacts Mg(2+).

It belongs to the acetokinase family. In terms of assembly, homodimer. It depends on Mg(2+) as a cofactor. Mn(2+) serves as cofactor.

The protein localises to the cytoplasm. The catalysed reaction is acetate + ATP = acetyl phosphate + ADP. Its pathway is metabolic intermediate biosynthesis; acetyl-CoA biosynthesis; acetyl-CoA from acetate: step 1/2. Catalyzes the formation of acetyl phosphate from acetate and ATP. Can also catalyze the reverse reaction. This Helicobacter acinonychis (strain Sheeba) protein is Acetate kinase.